We begin with the raw amino-acid sequence, 452 residues long: Molybdate-anion transporter (452 aa).

Transmembrane regions (helical) follow at residues 1–21 (MLLT…VLEF), 45–65 (YDFY…GPYL), 79–99 (IAII…VSAP), 130–150 (FVLI…FSSF), 180–200 (NGGI…WLGL), 201–221 (GPAS…ALVI), 251–271 (VLLL…FIFL), 281–301 (TPLG…SSLY), 316–336 (VLCL…FSTA), 346–366 (LLAF…MGFL), 377–397 (IGVL…GLLV), and 410–430 (MFSL…SLFT).

It belongs to the major facilitator superfamily.

The protein resides in the cell membrane. Mediates high-affinity intracellular uptake of the rare oligo-element molybdenum. This chain is Molybdate-anion transporter (mfsd5), found in Xenopus tropicalis (Western clawed frog).